The primary structure comprises 417 residues: Phosphoglycerate kinase, cytosolic (417 aa).

Residues Val23, Asp24, Phe25, Asn26, Arg39, Ser61, His62, Gly64, Arg65, Arg132, His168, and Arg169 each coordinate (2R)-3-phosphoglycerate. Gly214 and Ala215 together coordinate ADP. Gly214 contributes to the CDP binding site. Positions 215 and 216 each coordinate AMP. Ala215 provides a ligand contact to ATP. Ala215 serves as a coordination point for Mg(2+). Lys216 serves as a coordination point for (2R)-3-phosphoglycerate. CDP is bound at residue Asp219. Asp219 contributes to the Mg(2+) binding site. 2 residues coordinate ADP: Lys220 and Gly238. Lys220 contributes to the AMP binding site. Residue Lys220 coordinates ATP. Gly238 is a CDP binding site. Residues Ala239 and Ala311 each coordinate AMP. Residues Ala239 and Ala311 each contribute to the ATP site. ADP is bound by residues Ala311 and Asn335. 2 residues coordinate CDP: Gly336 and Phe341. ADP contacts are provided by Phe341, Glu342, Asp374, and Thr375. AMP is bound at residue Glu342. Residues Glu342, Asp374, and Thr375 each contribute to the ATP site. Position 374 (Asp374) interacts with Mg(2+).

This sequence belongs to the phosphoglycerate kinase family. As to quaternary structure, monomer. Mg(2+) is required as a cofactor.

The protein resides in the cytoplasm. The catalysed reaction is (2R)-3-phosphoglycerate + ATP = (2R)-3-phospho-glyceroyl phosphate + ADP. It functions in the pathway carbohydrate degradation; glycolysis; pyruvate from D-glyceraldehyde 3-phosphate: step 2/5. This chain is Phosphoglycerate kinase, cytosolic (PGKB), found in Crithidia fasciculata.